Reading from the N-terminus, the 1148-residue chain is Minor outer capsid protein P2 (1148 aa).

Positions 930-1148 constitute a PPPDE domain; that stretch reads QDGTANIFQK…QYIQSIYDEL (219 aa). Residues H954 and C1111 contribute to the active site.

Belongs to the phytoreovirus minor outer capsid protein P2 family.

It localises to the virion. Its subcellular location is the host cytoplasm. In terms of biological role, minor capsid protein present in the outer capsid, which is required for adsorption of the virus onto host insect cells. In Nephotettix cincticeps (Green rice leafhopper), this protein is Minor outer capsid protein P2.